Here is a 387-residue protein sequence, read N- to C-terminus: Proline-rich protein 5 (387 aa).

Interaction with RICTOR regions lie at residues methionine 10–glycine 96 and histidine 189–tyrosine 219. The segment at proline 13–glutamine 34 is disordered. Basic and acidic residues predominate over residues leucine 18–threonine 33. Serine 253 carries the post-translational modification Phosphoserine. The interval asparagine 262 to valine 387 is disordered. Polar residues predominate over residues serine 305–proline 314. The residue at position 373 (serine 373) is a Phosphoserine.

The protein belongs to the PROTOR family. In terms of assembly, associated component of the mechanistic target of rapamycin complex 2 (mTORC2). Binds directly to MTOR and RICTOR within the TORC2 complex. As to expression, ubiquitously expressed. Expressed at high levels in kidney.

Associated subunit of mTORC2, which regulates cell growth and survival in response to hormonal signals. mTORC2 is activated by growth factors, but, in contrast to mTORC1, seems to be nutrient-insensitive. mTORC2 seems to function upstream of Rho GTPases to regulate the actin cytoskeleton, probably by activating one or more Rho-type guanine nucleotide exchange factors. PRR5 plays an important role in regulation of PDGFRB expression and in modulation of platelet-derived growth factor signaling. May act as a tumor suppressor in breast cancer. The chain is Proline-rich protein 5 from Mus musculus (Mouse).